The following is a 312-amino-acid chain: Aspartate carbamoyltransferase catalytic subunit (312 aa).

Residues R55 and T56 each contribute to the carbamoyl phosphate site. K83 contributes to the L-aspartate binding site. The carbamoyl phosphate site is built by R105, H138, and Q141. R171 and R225 together coordinate L-aspartate. Residues G266 and P267 each coordinate carbamoyl phosphate.

Belongs to the aspartate/ornithine carbamoyltransferase superfamily. ATCase family. As to quaternary structure, heterododecamer (2C3:3R2) of six catalytic PyrB chains organized as two trimers (C3), and six regulatory PyrI chains organized as three dimers (R2).

It carries out the reaction carbamoyl phosphate + L-aspartate = N-carbamoyl-L-aspartate + phosphate + H(+). The protein operates within pyrimidine metabolism; UMP biosynthesis via de novo pathway; (S)-dihydroorotate from bicarbonate: step 2/3. Functionally, catalyzes the condensation of carbamoyl phosphate and aspartate to form carbamoyl aspartate and inorganic phosphate, the committed step in the de novo pyrimidine nucleotide biosynthesis pathway. The sequence is that of Aspartate carbamoyltransferase catalytic subunit from Corynebacterium glutamicum (strain R).